Reading from the N-terminus, the 125-residue chain is Small ribosomal subunit protein eS8 (125 aa).

Over residues 1–11 (MAISQGKSTRL) the composition is skewed to polar residues. Positions 1–38 (MAISQGKSTRLPSGARNVANRGKRKAELGRDPAETRVD) are disordered. The span at 25–38 (KAELGRDPAETRVD) shows a compositional bias: basic and acidic residues.

It belongs to the eukaryotic ribosomal protein eS8 family. Part of the 30S ribosomal subunit.

This is Small ribosomal subunit protein eS8 from Methanobrevibacter smithii (strain ATCC 35061 / DSM 861 / OCM 144 / PS).